The primary structure comprises 489 residues: GTPase Der (489 aa).

EngA-type G domains follow at residues proline 30–proline 199 and phenylalanine 227–histidine 403. GTP-binding positions include glycine 36–serine 43, aspartate 85–leucine 89, asparagine 151–aspartate 154, glycine 233–serine 240, aspartate 280–isoleucine 284, and asparagine 345–aspartate 348. The KH-like domain maps to arginine 404–arginine 488.

It belongs to the TRAFAC class TrmE-Era-EngA-EngB-Septin-like GTPase superfamily. EngA (Der) GTPase family. Associates with the 50S ribosomal subunit.

Its function is as follows. GTPase that plays an essential role in the late steps of ribosome biogenesis. The protein is GTPase Der of Leptospira interrogans serogroup Icterohaemorrhagiae serovar Lai (strain 56601).